Consider the following 1284-residue polypeptide: Neurexin-4 (1284 aa).

Residues 1–35 form the signal peptide; sequence MRPPRSNTKAAFSSLQFGLLCLLLLVNNGIKSVQA. The Extracellular segment spans residues 36–1217; sequence DAFTDYFSDY…LRKAYNEVDS (1182 aa). The F5/8 type C domain occupies 47 to 185; sequence CNQPLMERAV…ISMRVELYGC (139 aa). The cysteines at positions 47 and 185 are disulfide-linked. N-linked (GlcNAc...) asparagine glycans are attached at residues asparagine 195, asparagine 329, asparagine 340, and asparagine 398. Positions 220-369 constitute a Laminin G-like 1 domain; sequence FKTAFANGVM…FTRVNTIYAC (150 aa). The cysteines at positions 333 and 369 are disulfide-linked. A Laminin G-like 2 domain is found at 403 to 540; the sequence is FRTYEETGVM…CGDDVVVDAC (138 aa). Cystine bridges form between cysteine 507-cysteine 540, cysteine 546-cysteine 557, cysteine 551-cysteine 566, and cysteine 568-cysteine 578. The EGF-like 1 domain occupies 542–579; the sequence is MIDRCNPNPCQHKGLCHQNSREFFCDCGHTGYAGAVCH. N-linked (GlcNAc...) asparagine glycosylation occurs at asparagine 668. The region spanning 824–962 is the Laminin G-like 3 domain; that stretch reads FRTTQENSVI…RGLYGISTGC (139 aa). Disulfide bonds link cysteine 934-cysteine 962, cysteine 966-cysteine 977, cysteine 971-cysteine 986, and cysteine 988-cysteine 998. The EGF-like 2 domain occupies 962–999; that stretch reads CVGRCESNPCLNNGTCIERYDGYSCDCRWSAFKGPICA. N-linked (GlcNAc...) asparagine glycosylation is present at asparagine 974. In terms of domain architecture, Laminin G-like 4 spans 1032–1183; it reads FTTTIPKGFL…LGTQLTEDFC (152 aa). Asparagine 1047 and asparagine 1137 each carry an N-linked (GlcNAc...) asparagine glycan. Cysteine 1147 and cysteine 1183 are joined by a disulfide. A helical transmembrane segment spans residues 1218–1238; sequence VLLACLLVILFLLLILMFFLI. Over 1239-1284 the chain is Cytoplasmic; sequence GRYLHRHKGDYLTHEDQGADGADDPDDAVLHSTTGHQVRKRTEIFI.

The protein belongs to the neurexin family. In terms of assembly, forms a complex with Nrg and Cont. Forms a complex composed of septa junction proteins Nrx-IV/Nrx, Tsf2/MTf, Cont and Nrg during late embryogenesis. The C-terminal region interacts with coracle. Interacts with Patj in cis form. In terms of tissue distribution, found in septate junctions of epithelial and glial cells.

Its subcellular location is the cell membrane. It localises to the cell junction. It is found in the septate junction. Its function is as follows. Seems to play a role in the formation and function of septate junctions. Septate junctions, which are the equivalent of vertebrates tight junctions, are characterized by regular arrays of transverse structures that span the intermembrane space and form a physical barrier to diffusion. Required for the blood-brain barrier formation. The sequence is that of Neurexin-4 (Nrx-IV) from Drosophila melanogaster (Fruit fly).